The chain runs to 61 residues: Small ribosomal subunit protein uS14C (61 aa).

The Zn(2+) site is built by Cys-24, Cys-27, Cys-40, and Cys-43.

This sequence belongs to the universal ribosomal protein uS14 family. Zinc-binding uS14 subfamily. In terms of assembly, part of the 30S ribosomal subunit. Contacts proteins S3 and S10. The cofactor is Zn(2+).

In terms of biological role, binds 16S rRNA, required for the assembly of 30S particles and may also be responsible for determining the conformation of the 16S rRNA at the A site. The polypeptide is Small ribosomal subunit protein uS14C (Enterococcus faecalis (strain ATCC 700802 / V583)).